The primary structure comprises 1140 residues: Eukaryotic translation initiation factor 3 subunit A (1140 aa).

The region spanning L319–T502 is the PCI domain. 3 stretches are compositionally biased toward basic and acidic residues: residues Q589–E624, A830–D900, and E921–S984. Disordered regions lie at residues Q589–I632 and A830–R1140. Over residues A987–A998 the composition is skewed to low complexity. 3 stretches are compositionally biased toward basic and acidic residues: residues S999–R1050, D1058–Q1086, and P1109–D1130.

This sequence belongs to the eIF-3 subunit A family. Component of the eukaryotic translation initiation factor 3 (eIF-3) complex. The eIF-3 complex interacts with pix.

Its subcellular location is the cytoplasm. Functionally, RNA-binding component of the eukaryotic translation initiation factor 3 (eIF-3) complex, which is involved in protein synthesis of a specialized repertoire of mRNAs and, together with other initiation factors, stimulates binding of mRNA and methionyl-tRNAi to the 40S ribosome. The eIF-3 complex specifically targets and initiates translation of a subset of mRNAs involved in cell proliferation. The sequence is that of Eukaryotic translation initiation factor 3 subunit A from Drosophila ananassae (Fruit fly).